A 188-amino-acid polypeptide reads, in one-letter code: Elongation factor P (188 aa).

N6-(3,6-diaminohexanoyl)-5-hydroxylysine is present on K34.

The protein belongs to the elongation factor P family. Post-translationally, may be beta-lysylated on the epsilon-amino group of Lys-34 by the combined action of EpmA and EpmB, and then hydroxylated on the C5 position of the same residue by EpmC (if this protein is present). Lysylation is critical for the stimulatory effect of EF-P on peptide-bond formation. The lysylation moiety may extend toward the peptidyltransferase center and stabilize the terminal 3-CCA end of the tRNA. Hydroxylation of the C5 position on Lys-34 may allow additional potential stabilizing hydrogen-bond interactions with the P-tRNA.

The protein resides in the cytoplasm. It participates in protein biosynthesis; polypeptide chain elongation. In terms of biological role, involved in peptide bond synthesis. Alleviates ribosome stalling that occurs when 3 or more consecutive Pro residues or the sequence PPG is present in a protein, possibly by augmenting the peptidyl transferase activity of the ribosome. Modification of Lys-34 is required for alleviation. The sequence is that of Elongation factor P from Klebsiella pneumoniae (strain 342).